A 375-amino-acid polypeptide reads, in one-letter code: tRNA-specific 2-thiouridylase MnmA (375 aa).

ATP is bound by residues 17-24 and Met-43; that span reads GMSGGVDS. Residues 103–105 are interaction with target base in tRNA; that stretch reads NPD. The active-site Nucleophile is the Cys-108. The cysteines at positions 108 and 204 are disulfide-linked. Gly-132 serves as a coordination point for ATP. Positions 154 to 156 are interaction with tRNA; that stretch reads KDQ. The active-site Cysteine persulfide intermediate is Cys-204. The interaction with tRNA stretch occupies residues 316–317; that stretch reads RY.

This sequence belongs to the MnmA/TRMU family.

Its subcellular location is the cytoplasm. The enzyme catalyses S-sulfanyl-L-cysteinyl-[protein] + uridine(34) in tRNA + AH2 + ATP = 2-thiouridine(34) in tRNA + L-cysteinyl-[protein] + A + AMP + diphosphate + H(+). In terms of biological role, catalyzes the 2-thiolation of uridine at the wobble position (U34) of tRNA, leading to the formation of s(2)U34. The protein is tRNA-specific 2-thiouridylase MnmA of Stutzerimonas stutzeri (strain A1501) (Pseudomonas stutzeri).